Consider the following 388-residue polypeptide: Pepsin A-1 (388 aa).

The signal sequence occupies residues 1–15; sequence MKWLLLLGLVALSEC. 2 propeptides (activation peptide) span residues 16-40 and 41-62; these read IIYKVPLVRKKSLRRNLSEHGLLKD and FLKKHNLNPASKYFPQAEAPTL. Residues 76–385 form the Peptidase A1 domain; that stretch reads YFGTIGIGTP…DRANNQVGLA (310 aa). Residue D94 is part of the active site. C107 and C112 are joined by a disulfide. Position 130 is a phosphoserine (S130). C268 and C272 form a disulfide bridge. D277 is a catalytic residue. A disulfide bridge links C311 with C344.

This sequence belongs to the peptidase A1 family. Post-translationally, each pepsinogen is converted to corresponding pepsin at pH 2.0 in part as a result of the release of a 47 AA activation segment and in part as a result of stepwise proteolytic cleavage via an intermediate form(s).

The protein localises to the secreted. The enzyme catalyses Preferential cleavage: hydrophobic, preferably aromatic, residues in P1 and P1' positions. Cleaves 1-Phe-|-Val-2, 4-Gln-|-His-5, 13-Glu-|-Ala-14, 14-Ala-|-Leu-15, 15-Leu-|-Tyr-16, 16-Tyr-|-Leu-17, 23-Gly-|-Phe-24, 24-Phe-|-Phe-25 and 25-Phe-|-Tyr-26 bonds in the B chain of insulin.. In terms of biological role, shows particularly broad specificity; although bonds involving phenylalanine and leucine are preferred, many others are also cleaved to some extent. The polypeptide is Pepsin A-1 (PGA) (Macaca fuscata fuscata (Japanese macaque)).